Consider the following 215-residue polypeptide: Adenylate kinase (215 aa).

Residue 10-15 (GAGKGT) coordinates ATP. Positions 30–59 (STGDIFRKNISENTPLGMEARSYMDKGLLV) are NMP. Residues threonine 31, arginine 36, 57–59 (LLV), 85–88 (GFPR), and glutamine 92 contribute to the AMP site. The LID stretch occupies residues 126-163 (GRRVCTSCGGSFHIKFNPPTIDGKCNLCGSDIVQRKDD). Position 127 (arginine 127) interacts with ATP. Residues cysteine 130 and cysteine 133 each contribute to the Zn(2+) site. Position 136-137 (136-137 (SF)) interacts with ATP. Zn(2+) is bound by residues cysteine 150 and cysteine 153. Residues arginine 160 and arginine 171 each contribute to the AMP site. Lysine 199 lines the ATP pocket.

This sequence belongs to the adenylate kinase family. In terms of assembly, monomer.

It is found in the cytoplasm. It catalyses the reaction AMP + ATP = 2 ADP. Its pathway is purine metabolism; AMP biosynthesis via salvage pathway; AMP from ADP: step 1/1. Its function is as follows. Catalyzes the reversible transfer of the terminal phosphate group between ATP and AMP. Plays an important role in cellular energy homeostasis and in adenine nucleotide metabolism. This Clostridium botulinum (strain Alaska E43 / Type E3) protein is Adenylate kinase.